Here is a 433-residue protein sequence, read N- to C-terminus: Serine--tRNA ligase (433 aa).

235–237 (TSE) provides a ligand contact to L-serine. 266–268 (RSE) is a binding site for ATP. Position 289 (glutamate 289) interacts with L-serine. 353-356 (EISS) lines the ATP pocket. Serine 388 contacts L-serine.

This sequence belongs to the class-II aminoacyl-tRNA synthetase family. Type-1 seryl-tRNA synthetase subfamily. In terms of assembly, homodimer. The tRNA molecule binds across the dimer.

It is found in the cytoplasm. It catalyses the reaction tRNA(Ser) + L-serine + ATP = L-seryl-tRNA(Ser) + AMP + diphosphate + H(+). It carries out the reaction tRNA(Sec) + L-serine + ATP = L-seryl-tRNA(Sec) + AMP + diphosphate + H(+). Its pathway is aminoacyl-tRNA biosynthesis; selenocysteinyl-tRNA(Sec) biosynthesis; L-seryl-tRNA(Sec) from L-serine and tRNA(Sec): step 1/1. In terms of biological role, catalyzes the attachment of serine to tRNA(Ser). Is also able to aminoacylate tRNA(Sec) with serine, to form the misacylated tRNA L-seryl-tRNA(Sec), which will be further converted into selenocysteinyl-tRNA(Sec). The chain is Serine--tRNA ligase from Burkholderia cenocepacia (strain ATCC BAA-245 / DSM 16553 / LMG 16656 / NCTC 13227 / J2315 / CF5610) (Burkholderia cepacia (strain J2315)).